The following is a 5255-amino-acid chain: SCO-spondin (5255 aa).

Positions 1–18 (MGIVATVLLWVVTEAARG) are cleaved as a signal peptide. An EMI domain is found at 19–111 (RWCERTEQVT…ACCAGWSGPH (93 aa)). 4 N-linked (GlcNAc...) asparagine glycosylation sites follow: asparagine 97, asparagine 136, asparagine 156, and asparagine 255. Positions 192–358 (ASCTVWAGSR…PDANPELSCS (167 aa)) constitute a VWFD 1 domain. Cystine bridges form between cysteine 194-cysteine 317 and cysteine 216-cysteine 357. A TIL 1 domain is found at 453–508 (CGHGQRYSDCVSSCPASCMAAGTAEEGHCRDDCASGCECTPGLLLDRGACIPQSAC). In terms of domain architecture, VWFC 1 spans 508 to 601 (CPCLHRGHIY…CGGHQPLSCL (94 aa)). The 172-residue stretch at 546-717 (AECAVLGDLH…NKYRVSTDCP (172 aa)) folds into the VWFD 2 domain. 3 disulfides stabilise this stretch: cysteine 548–cysteine 681, cysteine 570–cysteine 716, and cysteine 592–cysteine 600. N-linked (GlcNAc...) asparagine glycosylation occurs at asparagine 801. The TIL 2 domain maps to 809 to 868 (CRGGQVYQECSSPCGRTCADLRLDGASSCPSLDNICVSGCNCPEGPVLDDGGQCVPPGVC). The region spanning 868-926 (CPCQHSSQLYPAGSKIRQGCNACMCTAGTWSCTDAPCPDAAFCPGDLVYVFGSCLRTCD) is the VWFC 2 domain. N-linked (GlcNAc...) asparagine glycans are attached at residues asparagine 931 and asparagine 972. The VWFD 3 domain maps to 998–1168 (GTCVATGDPH…NSWRVSLLCP (171 aa)). Intrachain disulfides connect cysteine 1000–cysteine 1132, cysteine 1022–cysteine 1167, and cysteine 1043–cysteine 1050. The TIL 3 domain occupies 1263–1319 (CDGGQEYSACGPPCPQTCRNLGLELPEHCDTMSCLEGCFCPEGKVLHEGSCIDPAEC). The N-linked (GlcNAc...) asparagine glycan is linked to asparagine 1340. LDL-receptor class A domains are found at residues 1362–1398 (HCPD…EVCA), 1400–1436 (HCAP…RGCP), 1439–1477 (PCAP…AGCS), 1479–1515 (SCSV…RGCV), 1515–1551 (VCPA…AFCP), and 1555–1593 (TCAP…VRCM). 18 disulfides stabilise this stretch: cysteine 1363–cysteine 1376, cysteine 1370–cysteine 1389, cysteine 1383–cysteine 1397, cysteine 1401–cysteine 1413, cysteine 1408–cysteine 1426, cysteine 1420–cysteine 1435, cysteine 1440–cysteine 1452, cysteine 1447–cysteine 1465, cysteine 1459–cysteine 1476, cysteine 1480–cysteine 1492, cysteine 1487–cysteine 1505, cysteine 1499–cysteine 1514, cysteine 1516–cysteine 1528, cysteine 1523–cysteine 1541, cysteine 1535–cysteine 1550, cysteine 1556–cysteine 1568, cysteine 1563–cysteine 1581, and cysteine 1575–cysteine 1592. A glycan (N-linked (GlcNAc...) asparagine) is linked at asparagine 1610. LDL-receptor class A domains lie at 1616–1652 (VCGP…LGCN), 1654–1693 (SCVL…DNCG), and 1699–1734 (PCPG…LACE). 3 disulfide bridges follow: cysteine 1617-cysteine 1629, cysteine 1624-cysteine 1642, and cysteine 1636-cysteine 1651. The N-linked (GlcNAc...) asparagine glycan is linked to asparagine 1652. Cystine bridges form between cysteine 1655–cysteine 1668, cysteine 1662–cysteine 1681, cysteine 1675–cysteine 1692, cysteine 1700–cysteine 1711, cysteine 1706–cysteine 1724, and cysteine 1718–cysteine 1733. Residue asparagine 1713 is glycosylated (N-linked (GlcNAc...) asparagine). The N-linked (GlcNAc...) asparagine glycan is linked to asparagine 1743. Residues 1748–1790 (PCAEYSCRDGDCITFKQVCNGLPDCRDGDMASGWLPSDEWDCG) enclose the LDL-receptor class A 10 domain. Cystine bridges form between cysteine 1749–cysteine 1759, cysteine 1754–cysteine 1772, cysteine 1766–cysteine 1789, cysteine 1801–cysteine 1837, cysteine 1805–cysteine 1842, and cysteine 1816–cysteine 1827. 2 consecutive TSP type-1 domains span residues 1789–1843 (CGQW…TACP) and 1845–1903 (DGAW…DGCP). N-linked (GlcNAc...) asparagine glycosylation is present at asparagine 1856. 3 cysteine pairs are disulfide-bonded: cysteine 1857-cysteine 1897, cysteine 1861-cysteine 1902, and cysteine 1871-cysteine 1881. In terms of domain architecture, TIL 4 spans 1907–1961 (CPGGLQPRPCAPCPASCADLASRAPCRREQCTPGCWCAEGLVLDGERGCVRPREC). 2 EGF-like domains span residues 1919–1956 (CPAS…RGCV) and 1957–1983 (RPRE…CRLC). The VWFC 3 domain maps to 1961–2019 (CRCEVDGLRYWPGQRMKLNCRLCTCLDGQPRRCRHNPACSVSCSWSAWSPWGECLGPCG). Positions 2002 to 2058 (SCSWSAWSPWGECLGPCGVQSIQWSFRSPSHPGKHGTNRQCRGIYRKARRCQTEPCQ) constitute a TSP type-1 3 domain. Intrachain disulfides connect cysteine 2003/cysteine 2042, cysteine 2014/cysteine 2018, and cysteine 2052/cysteine 2057. Residues 2058–2120 (QECEHQGRSR…GKGDSCCFCA (63 aa)) form the VWFC 4 domain. N-linked (GlcNAc...) asparagine glycosylation is found at asparagine 2125 and asparagine 2230. Disulfide bonds link cysteine 2162-cysteine 2310, cysteine 2328-cysteine 2339, cysteine 2335-cysteine 2352, and cysteine 2346-cysteine 2361. Residues 2162 to 2310 (CYSPLGIASL…IFLRAELLGC (149 aa)) enclose the F5/8 type C domain. An LDL-receptor class A 11 domain is found at 2327 to 2362 (PCGTGEFWCGVSCVTASRRCDGATDCPGGADEAGCE). Positions 2352–2373 (CPGGADEAGCEPPSSTTLPTHP) are disordered. Positions 2364–2373 (PSSTTLPTHP) are enriched in polar residues. 2 consecutive LDL-receptor class A domains span residues 2481 to 2517 (LCPP…AHCG) and 2538 to 2574 (TCSP…SSCA). 12 cysteine pairs are disulfide-bonded: cysteine 2482-cysteine 2494, cysteine 2489-cysteine 2507, cysteine 2501-cysteine 2516, cysteine 2539-cysteine 2551, cysteine 2546-cysteine 2564, cysteine 2558-cysteine 2573, cysteine 2576-cysteine 2612, cysteine 2587-cysteine 2591, cysteine 2622-cysteine 2627, cysteine 2642-cysteine 2679, cysteine 2646-cysteine 2684, and cysteine 2657-cysteine 2669. TSP type-1 domains follow at residues 2575–2628 (DCIL…RACP) and 2630–2685 (PGAW…QPCG). Residues 2708 to 2750 (PPCPQVCGDLSATSSCQSPCQEGCRCPPGLFLQEGTCVNASQC) enclose the TIL 5 domain. N-linked (GlcNAc...) asparagine glycosylation occurs at asparagine 2746. 3 TSP type-1 domains span residues 2790-2844 (ACAW…TPCA), 2849-2903 (SSGW…APCP), and 2905-2958 (AGVW…RPCG). Cystine bridges form between cysteine 2791–cysteine 2829, cysteine 2802–cysteine 2806, cysteine 2839–cysteine 2843, cysteine 2861–cysteine 2897, cysteine 2865–cysteine 2902, cysteine 2881–cysteine 2887, cysteine 2917–cysteine 2952, cysteine 2921–cysteine 2957, and cysteine 2932–cysteine 2942. The region spanning 2971–3020 (EECRHSEGRCPWICQDLGAGVACTAQCQPGCHCPAGLLLQNGTCVPPSHC) is the TIL 6 domain. N-linked (GlcNAc...) asparagine glycosylation is found at asparagine 3011, asparagine 3042, and asparagine 3065. The VWFC 5 domain occupies 3020–3077 (CLCHHRGHLYQPGDINALDTCNNCTCVTGQMVCSTETCPVPCTWSNWTAWSTCSHSCD). 2 consecutive TSP type-1 domains span residues 3060–3115 (PCTW…QPCR) and 3117–3158 (VAPW…APCP). Intrachain disulfides connect cysteine 3061–cysteine 3099, cysteine 3072–cysteine 3076, and cysteine 3109–cysteine 3114. A glycan (N-linked (GlcNAc...) asparagine) is linked at asparagine 3136. Positions 3165–3217 (CPPGKQWQACAQGAASCAELSAAPPADGSCHPGCYCPPGALLLNNECVAEAAC) constitute a TIL 7 domain. One can recognise a VWFC 6 domain in the interval 3217–3275 (CPCAVDGVLYQPGDVVPQGCHNCSCIAGRVTNCSQEDCGDVDGPWTPWTPWSECSASCG). Asparagine 3238 and asparagine 3248 each carry an N-linked (GlcNAc...) asparagine glycan. Positions 3258–3309 (DGPWTPWTPWSECSASCGPGRQRRYRFCSAHPGVPCAEPQPQERPCARQPCH) constitute a TSP type-1 11 domain. Disulfide bonds link cysteine 3270–cysteine 3303, cysteine 3274–cysteine 3308, and cysteine 3285–cysteine 3293. Asparagine 3350, asparagine 3366, and asparagine 3392 each carry an N-linked (GlcNAc...) asparagine glycan. 2 consecutive TSP type-1 domains span residues 3410 to 3475 (PGAW…PPCP) and 3477 to 3532 (DGAW…SSCP). Intrachain disulfides connect cysteine 3422–cysteine 3468, cysteine 3426–cysteine 3474, cysteine 3437–cysteine 3449, cysteine 3489–cysteine 3524, cysteine 3492–cysteine 3531, and cysteine 3502–cysteine 3514. Positions 3534 to 3589 (CAGGLVAFTCGKPCPHSCEDLREDTACMATPRCLPACACPHGQLLQDGDCVPPELC) constitute a TIL 8 domain. Asparagine 3598 and asparagine 3625 each carry an N-linked (GlcNAc...) asparagine glycan. 2 consecutive TSP type-1 domains span residues 3644–3700 (DGGW…EGCP) and 3702–3751 (EEPW…HVCR). Cystine bridges form between cysteine 3656/cysteine 3693, cysteine 3660/cysteine 3699, cysteine 3671/cysteine 3683, cysteine 3714/cysteine 3745, cysteine 3718/cysteine 3750, and cysteine 3729/cysteine 3735. Asparagine 3823 and asparagine 3869 each carry an N-linked (GlcNAc...) asparagine glycan. TSP type-1 domains follow at residues 3878-3934 (DGGF…PECP), 3951-4004 (EEGF…PLCS), 4018-4074 (NCSW…QACK), and 4076-4131 (DGAW…QPCD). 6 cysteine pairs are disulfide-bonded: cysteine 3890–cysteine 3928, cysteine 3894–cysteine 3933, cysteine 3906–cysteine 3918, cysteine 3963–cysteine 3998, cysteine 3967–cysteine 4003, and cysteine 3982–cysteine 3988. A disordered region spans residues 3932-3951 (ECPAVPTTEPGPGVAGAEEE). N-linked (GlcNAc...) asparagine glycosylation is present at asparagine 4018. Intrachain disulfides connect cysteine 4019-cysteine 4055, cysteine 4030-cysteine 4034, cysteine 4068-cysteine 4073, cysteine 4088-cysteine 4125, cysteine 4092-cysteine 4130, and cysteine 4103-cysteine 4115. In terms of domain architecture, TIL 9 spans 4134–4189 (CPPGMALVTCANHCPRHCGDLQEGIVCREEEHCEPGCRCPNGTLEQDGGCVPLAHC). N-linked (GlcNAc...) asparagine glycans are attached at residues asparagine 4174 and asparagine 4211. 3 TSP type-1 domains span residues 4230–4282 (RCPW…GPCP), 4322–4384 (GAEH…RPCP), and 4386–4433 (ECSW…SGCS). 3 disulfide bridges follow: cysteine 4231–cysteine 4266, cysteine 4242–cysteine 4246, and cysteine 4276–cysteine 4281. An N-linked (GlcNAc...) asparagine glycan is attached at asparagine 4362. 3 cysteine pairs are disulfide-bonded: cysteine 4387/cysteine 4417, cysteine 4398/cysteine 4400, and cysteine 4427/cysteine 4432. Asparagine 4428 is a glycosylation site (N-linked (GlcNAc...) asparagine). The region spanning 4437–4492 (CEPPFEFQPCSPPCARLCSTLQHPELCPAQSHCLPGCFCPQGLLEQRSACVPPEQC) is the TIL 10 domain. N-linked (GlcNAc...) asparagine glycosylation is present at asparagine 4498. TSP type-1 domains lie at 4537-4608 (LPLS…DICQ) and 4610-4662 (LCLW…AVCP). Intrachain disulfides connect cysteine 4548/cysteine 4601, cysteine 4551/cysteine 4607, cysteine 4575/cysteine 4591, cysteine 4611/cysteine 4646, cysteine 4622/cysteine 4626, and cysteine 4656/cysteine 4661. In terms of domain architecture, TIL 11 spans 4675–4722 (TTCANSCPRACADLWQHVECVQGGCKPGCRCPQGQLLQDGLCVPTAQC). 3 N-linked (GlcNAc...) asparagine glycosylation sites follow: asparagine 4730, asparagine 4747, and asparagine 4752. TSP type-1 domains follow at residues 4762 to 4815 (CPSY…QPCP) and 4817 to 4869 (GCQL…HNCT). Disulfide bonds link cysteine 4774-cysteine 4809, cysteine 4778-cysteine 4814, cysteine 4789-cysteine 4798, cysteine 4818-cysteine 4852, cysteine 4829-cysteine 4833, and cysteine 4863-cysteine 4868. Asparagine 4867 is a glycosylation site (N-linked (GlcNAc...) asparagine). In terms of domain architecture, TIL 12 spans 4872-4926 (CPRSQVHRECANACPHACADLRPQTQCLPQPCQPGCACPPGQVLQDGACVPPEEC). Residues asparagine 4939 and asparagine 4970 are each glycosylated (N-linked (GlcNAc...) asparagine). One can recognise a TSP type-1 27 domain in the interval 4979-5033 (DCLWSPWSPWSPCSVTCGMGERLSHRHPLRQRLYEGAECLGPPVRRAACHLPDCA). Intrachain disulfides connect cysteine 4980–cysteine 5017, cysteine 4991–cysteine 4995, and cysteine 5027–cysteine 5032. 3 N-linked (GlcNAc...) asparagine glycosylation sites follow: asparagine 5081, asparagine 5122, and asparagine 5169. The VWFC 7 domain occupies 5092-5150 (CECLHQGQLHQPGSEWQEQCARCRCVDGKANCTDGCTPLSCPEGEVKVREPGRCCPVCR). Disulfide bonds link cysteine 5161–cysteine 5209, cysteine 5175–cysteine 5226, cysteine 5185–cysteine 5242, and cysteine 5189–cysteine 5244. The CTCK domain maps to 5161–5248 (CRRFTELRNI…IHSCECSSCQ (88 aa)).

It belongs to the thrombospondin family.

It localises to the secreted. The protein localises to the extracellular space. Its function is as follows. Involved in the modulation of neuronal aggregation. May be involved in developmental events during the formation of the central nervous system. This is SCO-spondin (SSPO) from Gallus gallus (Chicken).